A 258-amino-acid chain; its full sequence is 5'-nucleotidase SurE (258 aa).

Positions 8, 9, 40, and 98 each coordinate a divalent metal cation.

It belongs to the SurE nucleotidase family. A divalent metal cation is required as a cofactor.

It localises to the cytoplasm. It carries out the reaction a ribonucleoside 5'-phosphate + H2O = a ribonucleoside + phosphate. In terms of biological role, nucleotidase that shows phosphatase activity on nucleoside 5'-monophosphates. The protein is 5'-nucleotidase SurE of Synechococcus elongatus (strain ATCC 33912 / PCC 7942 / FACHB-805) (Anacystis nidulans R2).